Reading from the N-terminus, the 842-residue chain is Synaptonemal complex protein 2-like (842 aa).

Disordered regions lie at residues 451-473 (GSLE…EPEQ), 505-560 (FARD…KQRV), 619-666 (STQK…SSLE), and 715-738 (EDAP…PGSV). 2 stretches are compositionally biased toward basic and acidic residues: residues 458 to 470 (TEER…KQDE) and 505 to 525 (FARD…HDLL). A compositionally biased stretch (basic residues) spans 543-559 (NHKRKSLRTYSQRKKQR). 2 stretches are compositionally biased toward basic and acidic residues: residues 624–633 (GLEKPERRGS) and 643–655 (RVTD…EPRS).

This sequence belongs to the SYCP2 family. As to expression, specifically expressed in oocytes.

Its subcellular location is the nucleus. The protein localises to the chromosome. It is found in the centromere. Its function is as follows. Oocyte-specific protein that localizes to centromeres at the dictyate stage and regulates the survival of primordial oocytes. The sequence is that of Synaptonemal complex protein 2-like from Mus musculus (Mouse).